Here is a 65-residue protein sequence, read N- to C-terminus: MAIDKTTLAILACPKCKGKLTYYADKDELVCRGERLAYPIDENIPVLIADKARELSSEELEKVPS.

It belongs to the UPF0434 family.

This chain is UPF0434 protein IL1511, found in Idiomarina loihiensis (strain ATCC BAA-735 / DSM 15497 / L2-TR).